Reading from the N-terminus, the 156-residue chain is Cyanate hydratase (156 aa).

Residues Arg96, Glu99, and Ser122 contribute to the active site.

It belongs to the cyanase family.

It carries out the reaction cyanate + hydrogencarbonate + 3 H(+) = NH4(+) + 2 CO2. In terms of biological role, catalyzes the reaction of cyanate with bicarbonate to produce ammonia and carbon dioxide. The chain is Cyanate hydratase from Escherichia coli (strain ATCC 8739 / DSM 1576 / NBRC 3972 / NCIMB 8545 / WDCM 00012 / Crooks).